The following is a 135-amino-acid chain: Large-conductance mechanosensitive channel (135 aa).

2 helical membrane-spanning segments follow: residues 9–29 (AFAA…GAAF) and 79–99 (IQTI…LKAI).

This sequence belongs to the MscL family. Homopentamer.

The protein resides in the cell inner membrane. Channel that opens in response to stretch forces in the membrane lipid bilayer. May participate in the regulation of osmotic pressure changes within the cell. This Aeromonas salmonicida (strain A449) protein is Large-conductance mechanosensitive channel.